Reading from the N-terminus, the 312-residue chain is Retinol dehydrogenase 8 (312 aa).

NADP(+) is bound at residue 9–18 (LISGCSSGIG). The next 3 membrane-spanning stretches (helical) occupy residues 87–107 (VLVNNAGVGLVGPLEGLSLAA), 138–158 (IVVVSSVMGLQGVVFNEVYAA), and 170–190 (LAVQLLQFNIFISLVEPGPVV). Residue S143 coordinates substrate. Y156 (proton acceptor) is an active-site residue.

This sequence belongs to the short-chain dehydrogenases/reductases (SDR) family. Detected in photoreceptor outer segments in the retina (at protein level).

The protein localises to the membrane. It catalyses the reaction all-trans-retinol + NADP(+) = all-trans-retinal + NADPH + H(+). Retinol dehydrogenase with a clear preference for NADP. Converts all-trans-retinal to all-trans-retinol. May play a role in the regeneration of visual pigment at high light intensity. This chain is Retinol dehydrogenase 8 (RDH8), found in Bos taurus (Bovine).